We begin with the raw amino-acid sequence, 697 residues long: Lebercilin (697 aa).

A disordered region spans residues Met1–Arg90. Residues Ser7 and Ser45 each carry the phosphoserine modification. The span at Ser32–Ser45 shows a compositional bias: low complexity. 2 coiled-coil regions span residues Arg103–Ile297 and Glu389–Lys485. 3 disordered regions span residues Trp412–Glu432, His522–Pro548, and Glu606–Arg697. Residues Glu416–Glu432 are compositionally biased toward basic and acidic residues. Residues Ile527–Ser547 are compositionally biased toward polar residues. A compositionally biased stretch (low complexity) spans Ser612–Ser626. Over residues Ser686–Arg697 the composition is skewed to acidic residues.

This sequence belongs to the LCA5 family. As to quaternary structure, interacts with NINL. Interacts with OFD1. Interacts with FAM161A. Interacts with components of the IFT complex B. In terms of tissue distribution, widely expressed.

Its subcellular location is the cytoplasm. It is found in the cytoskeleton. It localises to the cilium axoneme. The protein resides in the cilium basal body. The protein localises to the microtubule organizing center. Its subcellular location is the centrosome. It is found in the cell projection. It localises to the cilium. Involved in intraflagellar protein (IFT) transport in photoreceptor cilia. The polypeptide is Lebercilin (LCA5) (Homo sapiens (Human)).